The sequence spans 473 residues: Lactate utilization protein B (473 aa).

4Fe-4S ferredoxin-type domains are found at residues 302 to 332 (GSEF…GHSY) and 351 to 380 (YDDY…LHDL). Residues cysteine 311, cysteine 314, cysteine 317, cysteine 321, cysteine 364, cysteine 367, and cysteine 371 each contribute to the [4Fe-4S] cluster site.

The protein belongs to the LutB/YkgF family.

Its function is as follows. Is involved in L-lactate degradation and allows cells to grow with lactate as the sole carbon source. Has probably a role as an electron transporter during oxidation of L-lactate. The protein is Lactate utilization protein B of Bacillus anthracis (strain A0248).